The sequence spans 206 residues: Outer-membrane lipoprotein carrier protein (206 aa).

The N-terminal stretch at 1-20 (MRLIRMLLPVLALTTLTAHA) is a signal peptide.

The protein belongs to the LolA family. Monomer.

It is found in the periplasm. In terms of biological role, participates in the translocation of lipoproteins from the inner membrane to the outer membrane. Only forms a complex with a lipoprotein if the residue after the N-terminal Cys is not an aspartate (The Asp acts as a targeting signal to indicate that the lipoprotein should stay in the inner membrane). The protein is Outer-membrane lipoprotein carrier protein of Pseudomonas fluorescens (strain Pf0-1).